The primary structure comprises 290 residues: Formamidopyrimidine-DNA glycosylase (290 aa).

Proline 2 (schiff-base intermediate with DNA) is an active-site residue. The active-site Proton donor is the glutamate 3. Lysine 58 serves as the catalytic Proton donor; for beta-elimination activity. DNA contacts are provided by histidine 98, arginine 126, and arginine 171. An FPG-type zinc finger spans residues 256 to 290 (FVYDRAGLPCRVCATPVRQIVQGQRSTFYCPKCQH). The active-site Proton donor; for delta-elimination activity is arginine 280.

The protein belongs to the FPG family. In terms of assembly, monomer. It depends on Zn(2+) as a cofactor.

The enzyme catalyses Hydrolysis of DNA containing ring-opened 7-methylguanine residues, releasing 2,6-diamino-4-hydroxy-5-(N-methyl)formamidopyrimidine.. The catalysed reaction is 2'-deoxyribonucleotide-(2'-deoxyribose 5'-phosphate)-2'-deoxyribonucleotide-DNA = a 3'-end 2'-deoxyribonucleotide-(2,3-dehydro-2,3-deoxyribose 5'-phosphate)-DNA + a 5'-end 5'-phospho-2'-deoxyribonucleoside-DNA + H(+). Involved in base excision repair of DNA damaged by oxidation or by mutagenic agents. Acts as a DNA glycosylase that recognizes and removes damaged bases. Has a preference for oxidized purines, such as 7,8-dihydro-8-oxoguanine (8-oxoG). Has AP (apurinic/apyrimidinic) lyase activity and introduces nicks in the DNA strand. Cleaves the DNA backbone by beta-delta elimination to generate a single-strand break at the site of the removed base with both 3'- and 5'-phosphates. The chain is Formamidopyrimidine-DNA glycosylase from Cupriavidus taiwanensis (strain DSM 17343 / BCRC 17206 / CCUG 44338 / CIP 107171 / LMG 19424 / R1) (Ralstonia taiwanensis (strain LMG 19424)).